Here is a 685-residue protein sequence, read N- to C-terminus: DNA ligase (685 aa).

Residues 47–51, 96–97, and Glu125 each bind NAD(+); these read DSEYD and SL. Catalysis depends on Lys127, which acts as the N6-AMP-lysine intermediate. NAD(+) contacts are provided by Arg148, Glu185, Lys304, and Lys328. Positions 422, 425, 440, and 446 each coordinate Zn(2+). The region spanning 605–685 is the BRCT domain; it reads ADAQPLKGQT…ELLALLAANA (81 aa).

The protein belongs to the NAD-dependent DNA ligase family. LigA subfamily. Requires Mg(2+) as cofactor. The cofactor is Mn(2+).

It carries out the reaction NAD(+) + (deoxyribonucleotide)n-3'-hydroxyl + 5'-phospho-(deoxyribonucleotide)m = (deoxyribonucleotide)n+m + AMP + beta-nicotinamide D-nucleotide.. In terms of biological role, DNA ligase that catalyzes the formation of phosphodiester linkages between 5'-phosphoryl and 3'-hydroxyl groups in double-stranded DNA using NAD as a coenzyme and as the energy source for the reaction. It is essential for DNA replication and repair of damaged DNA. The polypeptide is DNA ligase (Shewanella baltica (strain OS195)).